The sequence spans 859 residues: Glucans biosynthesis glucosyltransferase H (859 aa).

6 helical membrane-spanning segments follow: residues 144 to 166 (YILLILMLGQTIVAGSYMKGILP), 200 to 222 (LLLFGILFCWVSAGFWTALMGFL), 523 to 545 (VMSYLSAPLWFFFLVLSTALLAV), 573 to 595 (VALFSTTIVLLFLPKLLSVILIW), 608 to 630 (VTVSMLLEMLFSVLLAPVRMLFH), and 684 to 706 (SFLWWLAPIVVSLMLSIPVSVIS).

The protein belongs to the glycosyltransferase 2 family. OpgH subfamily.

The protein resides in the cell inner membrane. The protein operates within glycan metabolism; osmoregulated periplasmic glucan (OPG) biosynthesis. In terms of biological role, involved in the biosynthesis of osmoregulated periplasmic glucans (OPGs). The sequence is that of Glucans biosynthesis glucosyltransferase H from Pseudomonas syringae pv. tomato (strain ATCC BAA-871 / DC3000).